A 793-amino-acid chain; its full sequence is Sucrose synthase (793 aa).

The GT-B glycosyltransferase stretch occupies residues 259 to 738 (MILNIAIISP…AIKRVTEKYS (480 aa)).

It belongs to the glycosyltransferase 1 family. Homotetramer.

It carries out the reaction an NDP-alpha-D-glucose + D-fructose = a ribonucleoside 5'-diphosphate + sucrose + H(+). Its function is as follows. Catalyzes the reversible conversion of sucrose and a nucleotide disphosphate (NDP) into fructose and NDP-glucose; although the reaction is freely reversible in vitro, the physiological reaction seems to be sucrose cleavage. Unlike characterized plant enzymes prefers ADP as a cosubstrate, whereas plants prefer UDP. Its preference for ADP over UDP suggests it may directly link sucrose and glycogen metabolism. The protein is Sucrose synthase of Melioribacter roseus (strain JCM 17771 / P3M-2).